We begin with the raw amino-acid sequence, 314 residues long: Probable cell division protein WhiA (314 aa).

The segment at residues 275 to 309 (SLKELGELVTSGAISKSGVNHRLKKIDEFAEKIKR) is a DNA-binding region (H-T-H motif).

This sequence belongs to the WhiA family.

Its function is as follows. Involved in cell division and chromosome segregation. The protein is Probable cell division protein WhiA of Oceanobacillus iheyensis (strain DSM 14371 / CIP 107618 / JCM 11309 / KCTC 3954 / HTE831).